The chain runs to 561 residues: MDFKNEVVDLVSSQVDLPKEKITALIERPKNAKMGDYAFPAFILAKTMHKNPAIIAKDIAENLNSDNFANIQAVGPYVNFAIDHEKLIASTLKDVLAEKEHYGDQKLGEGNVPIDMSSPNIAKPMSMGHLRSTVIGNSIAKTMKKVGYTPIKINYLGDYGTQFGKLIAAYKHWGNEEDVKKDPIMSLFHYYVKFHKEAENNPELDNEGREWFKKLEDGDPEAVELWKWFREVSLKDFKRIYKELGVTFDSYNGEAFFNDKMQPVIDELKDKGLLHESRGAQVVDMGEDENPAIIVKSDGTSIYLTRDLAAAEWRMKEYNFVKMLYVVGNEQAQHFVELKTVLKKMGYDWADEIHHVPFGLITQGGKKLSTRKGNVVFLDQVLRDAVNLAKKQIQEKNPDLADQDQVAHDVGVGAVVFHDLKNDRLDNFDFDLDEVVRFEGDTGPYVQYTNARAQSVLRKAAAMGEKPSEGDFNINDDWAFAVAKDLADFPRIVARSAEKFEPSVIAKFALDLAKKFNKYYANVKILTKDDQIGARLALVQATSIVLTESLRLLGVNAPKEM.

The 'HIGH' region motif lies at 119–129; it reads PNIAKPMSMGH.

The protein belongs to the class-I aminoacyl-tRNA synthetase family. Monomer.

Its subcellular location is the cytoplasm. It carries out the reaction tRNA(Arg) + L-arginine + ATP = L-arginyl-tRNA(Arg) + AMP + diphosphate. The chain is Arginine--tRNA ligase from Lactobacillus acidophilus (strain ATCC 700396 / NCK56 / N2 / NCFM).